A 233-amino-acid chain; its full sequence is 5'-methylthioadenosine/S-adenosylhomocysteine nucleosidase (233 aa).

Glutamate 12 (proton acceptor) is an active-site residue. Substrate-binding positions include glycine 78, isoleucine 152, and 173 to 174; that span reads ME. Aspartate 197 (proton donor) is an active-site residue.

This sequence belongs to the PNP/UDP phosphorylase family. MtnN subfamily. As to quaternary structure, homodimer.

It catalyses the reaction S-adenosyl-L-homocysteine + H2O = S-(5-deoxy-D-ribos-5-yl)-L-homocysteine + adenine. The enzyme catalyses S-methyl-5'-thioadenosine + H2O = 5-(methylsulfanyl)-D-ribose + adenine. It carries out the reaction 5'-deoxyadenosine + H2O = 5-deoxy-D-ribose + adenine. The protein operates within amino-acid biosynthesis; L-methionine biosynthesis via salvage pathway; S-methyl-5-thio-alpha-D-ribose 1-phosphate from S-methyl-5'-thioadenosine (hydrolase route): step 1/2. Its function is as follows. Catalyzes the irreversible cleavage of the glycosidic bond in both 5'-methylthioadenosine (MTA) and S-adenosylhomocysteine (SAH/AdoHcy) to adenine and the corresponding thioribose, 5'-methylthioribose and S-ribosylhomocysteine, respectively. Also cleaves 5'-deoxyadenosine, a toxic by-product of radical S-adenosylmethionine (SAM) enzymes, into 5-deoxyribose and adenine. Thus, is required for in vivo function of the radical SAM enzymes biotin synthase and lipoic acid synthase, that are inhibited by 5'-deoxyadenosine accumulation. The polypeptide is 5'-methylthioadenosine/S-adenosylhomocysteine nucleosidase (Sodalis glossinidius (strain morsitans)).